Reading from the N-terminus, the 739-residue chain is Phosphoribosylformylglycinamidine synthase subunit PurL (739 aa).

His55 is an active-site residue. Tyr58 and Lys97 together coordinate ATP. Glu99 contributes to the Mg(2+) binding site. Residues 100 to 103 (SHNH) and Arg122 contribute to the substrate site. The active-site Proton acceptor is His101. Asp123 provides a ligand contact to Mg(2+). A substrate-binding site is contributed by Gln246. Asp276 contacts Mg(2+). 320-322 (ESQ) serves as a coordination point for substrate. 2 residues coordinate ATP: Asp502 and Gly539. Asn540 serves as a coordination point for Mg(2+). Residue Ser542 coordinates substrate.

This sequence belongs to the FGAMS family. Monomer. Part of the FGAM synthase complex composed of 1 PurL, 1 PurQ and 2 PurS subunits.

It localises to the cytoplasm. It catalyses the reaction N(2)-formyl-N(1)-(5-phospho-beta-D-ribosyl)glycinamide + L-glutamine + ATP + H2O = 2-formamido-N(1)-(5-O-phospho-beta-D-ribosyl)acetamidine + L-glutamate + ADP + phosphate + H(+). It participates in purine metabolism; IMP biosynthesis via de novo pathway; 5-amino-1-(5-phospho-D-ribosyl)imidazole from N(2)-formyl-N(1)-(5-phospho-D-ribosyl)glycinamide: step 1/2. Its function is as follows. Part of the phosphoribosylformylglycinamidine synthase complex involved in the purines biosynthetic pathway. Catalyzes the ATP-dependent conversion of formylglycinamide ribonucleotide (FGAR) and glutamine to yield formylglycinamidine ribonucleotide (FGAM) and glutamate. The FGAM synthase complex is composed of three subunits. PurQ produces an ammonia molecule by converting glutamine to glutamate. PurL transfers the ammonia molecule to FGAR to form FGAM in an ATP-dependent manner. PurS interacts with PurQ and PurL and is thought to assist in the transfer of the ammonia molecule from PurQ to PurL. This Lactiplantibacillus plantarum (strain ATCC BAA-793 / NCIMB 8826 / WCFS1) (Lactobacillus plantarum) protein is Phosphoribosylformylglycinamidine synthase subunit PurL.